The following is a 273-amino-acid chain: 2,3,4,5-tetrahydropyridine-2,6-dicarboxylate N-succinyltransferase (273 aa).

Residues arginine 104 and aspartate 141 each contribute to the substrate site.

Belongs to the transferase hexapeptide repeat family. As to quaternary structure, homotrimer.

It is found in the cytoplasm. The catalysed reaction is (S)-2,3,4,5-tetrahydrodipicolinate + succinyl-CoA + H2O = (S)-2-succinylamino-6-oxoheptanedioate + CoA. Its pathway is amino-acid biosynthesis; L-lysine biosynthesis via DAP pathway; LL-2,6-diaminopimelate from (S)-tetrahydrodipicolinate (succinylase route): step 1/3. The polypeptide is 2,3,4,5-tetrahydropyridine-2,6-dicarboxylate N-succinyltransferase (Nitrosomonas eutropha (strain DSM 101675 / C91 / Nm57)).